The primary structure comprises 454 residues: NADP-specific glutamate dehydrogenase (454 aa).

Position 2 is an N-acetylserine (Ser2). Residue Lys114 is part of the active site.

This sequence belongs to the Glu/Leu/Phe/Val dehydrogenases family. As to quaternary structure, homohexamer.

The catalysed reaction is L-glutamate + NADP(+) + H2O = 2-oxoglutarate + NH4(+) + NADPH + H(+). The polypeptide is NADP-specific glutamate dehydrogenase (gdh) (Neurospora crassa (strain ATCC 24698 / 74-OR23-1A / CBS 708.71 / DSM 1257 / FGSC 987)).